The chain runs to 508 residues: Photosystem II CP47 reaction center protein (508 aa).

The next 6 helical transmembrane spans lie at 21 to 36 (SVHI…WAGS), 101 to 115 (IVFS…IWHW), 140 to 156 (GIHL…FGVF), 203 to 218 (IAAG…FHLS), 237 to 252 (VLSS…AFVV), and 457 to 472 (SFAL…HGAR).

It belongs to the PsbB/PsbC family. PsbB subfamily. PSII is composed of 1 copy each of membrane proteins PsbA, PsbB, PsbC, PsbD, PsbE, PsbF, PsbH, PsbI, PsbJ, PsbK, PsbL, PsbM, PsbT, PsbX, PsbY, PsbZ, Psb30/Ycf12, at least 3 peripheral proteins of the oxygen-evolving complex and a large number of cofactors. It forms dimeric complexes. Binds multiple chlorophylls. PSII binds additional chlorophylls, carotenoids and specific lipids. is required as a cofactor.

Its subcellular location is the plastid. The protein localises to the chloroplast thylakoid membrane. Its function is as follows. One of the components of the core complex of photosystem II (PSII). It binds chlorophyll and helps catalyze the primary light-induced photochemical processes of PSII. PSII is a light-driven water:plastoquinone oxidoreductase, using light energy to abstract electrons from H(2)O, generating O(2) and a proton gradient subsequently used for ATP formation. This chain is Photosystem II CP47 reaction center protein, found in Jasminum nudiflorum (Winter jasmine).